The following is a 377-amino-acid chain: 3-dehydroquinate synthase (377 aa).

Residues 115 to 119 (GVIGD), 139 to 140 (TS), Lys152, and Lys161 contribute to the NAD(+) site. Residues Glu194, His256, and His275 each contribute to the Zn(2+) site.

It belongs to the sugar phosphate cyclases superfamily. Dehydroquinate synthase family. Requires NAD(+) as cofactor. It depends on Co(2+) as a cofactor. The cofactor is Zn(2+).

Its subcellular location is the cytoplasm. It carries out the reaction 7-phospho-2-dehydro-3-deoxy-D-arabino-heptonate = 3-dehydroquinate + phosphate. It participates in metabolic intermediate biosynthesis; chorismate biosynthesis; chorismate from D-erythrose 4-phosphate and phosphoenolpyruvate: step 2/7. Functionally, catalyzes the conversion of 3-deoxy-D-arabino-heptulosonate 7-phosphate (DAHP) to dehydroquinate (DHQ). This Agrobacterium fabrum (strain C58 / ATCC 33970) (Agrobacterium tumefaciens (strain C58)) protein is 3-dehydroquinate synthase.